Consider the following 34-residue polypeptide: Photosystem II reaction center protein M (34 aa).

A helical membrane pass occupies residues 5-25 (ILAFIATALFILIPTAFLLII).

It belongs to the PsbM family. PSII is composed of 1 copy each of membrane proteins PsbA, PsbB, PsbC, PsbD, PsbE, PsbF, PsbH, PsbI, PsbJ, PsbK, PsbL, PsbM, PsbT, PsbX, PsbY, PsbZ, Psb30/Ycf12, at least 3 peripheral proteins of the oxygen-evolving complex and a large number of cofactors. It forms dimeric complexes.

The protein resides in the plastid. The protein localises to the chloroplast thylakoid membrane. Its function is as follows. One of the components of the core complex of photosystem II (PSII). PSII is a light-driven water:plastoquinone oxidoreductase that uses light energy to abstract electrons from H(2)O, generating O(2) and a proton gradient subsequently used for ATP formation. It consists of a core antenna complex that captures photons, and an electron transfer chain that converts photonic excitation into a charge separation. This subunit is found at the monomer-monomer interface. This chain is Photosystem II reaction center protein M, found in Lolium perenne (Perennial ryegrass).